The sequence spans 541 residues: MTNGGGGNNGAANRTEELQPHPVKEQLPGIQYCVNSPPPWLEAVVLGFQHYLLSLGITVLIPSVLVPLMGGGYAEKVKVIQTLLFVSGLTTLFQSFFGTRLPVIAVASYAYIIPITSIIYSTRFTYYTDPFERFVRTMRSIQGALIITGCFQVLICILGVWRNIVRFLSPLSIAPLATFTGLGLYHIGFPLLARCVEVGLPGLILLIFVTQYLPRFLKMKKGVMILDGSRCDRYGMILCIPLVWLFAQLLTSSGVYDHKSHTTQTSCRTDRTGLITNTPWIYIPYPFQWGSPTFDITDSFAMMAASFVTLFESTGLFYASARYGSATPIPPSVVSRGTCWLGVGVLLNGMLGGITGITTSTENVGLLAMTKIGSRRVIQISAAFMIFFSIFGKFGAFFASIPLPIMASLYCIVLCFVSSVGLSYLQFCNLNSFNIKFILGFSFFMAISIPQYFREYYNGGWRSDHHSNWLEDMIRVIFMSHTTVAAIIAIVLDCTLCRDSDEAKKDCGMKWWDKFRLYNLDVRNDEFYGLPCRLNKFFPSH.

12 consecutive transmembrane segments (helical) span residues 52–72 (LLSL…MGGG), 79–99 (VIQT…FFGT), 101–121 (LPVI…IIYS), 141–161 (IQGA…LGVW), 173–193 (IAPL…PLLA), 196–216 (VEVG…LPRF), 235–255 (GMIL…SSGV), 299–319 (SFAM…LFYA), 376–396 (RVIQ…KFGA), 397–417 (FFAS…LCFV), 433–453 (FNIK…PQYF), and 476–496 (VIFM…DCTL).

The protein belongs to the nucleobase:cation symporter-2 (NCS2) (TC 2.A.40) family.

Its subcellular location is the membrane. The protein is Putative nucleobase-ascorbate transporter 10 (NAT10) of Arabidopsis thaliana (Mouse-ear cress).